A 524-amino-acid polypeptide reads, in one-letter code: MSDLYAHRILILDFGSQYTQLIARRVREAGVYCEIHPYDMAESTLRDFAPRGIILSGGPASTVGETAPRLSPLIFELGVPLLGICYGMQVMAAQLGGRVEVSAQREYGYAQVYVHGHSRLLQNIEDHTTAGGEALLDVWMSHGDRVIGLPEGFKRIAATAHAPLAGMADEKRRFYGFQFHPEVTHTRQGIRILERFIYDICGCEALWEPRHIIAKSIENIRTKVGADTVLLGLSGGVDSSVAAALLHKAIGDQLICVFVDNGLLRQGEADQVMATFARHLGIKVIHISAETRFLEALAGVIDPEAKRKIIGRVFIEVFEEEAAKLPNAQWLAQGTIYPDVIESAGGKTGKAQVIKSHHNVGGLPEELNLKLLEPLRELFKDEVRQLGTELGLPFELVYRHPFPGPGLGVRILGEVKKEYADLLRLADAIFIEELHAHDWYDKVSQAFAVFLPVKSVGVMGDGRCYDFVVALRAVESVDFMTARWAHLPYDFLDHVSRRIINEVAGISRVTYDISGKPPATIEWE.

Positions 8 to 206 constitute a Glutamine amidotransferase type-1 domain; sequence RILILDFGSQ…IYDICGCEAL (199 aa). C85 (nucleophile) is an active-site residue. Catalysis depends on residues H180 and E182. The GMPS ATP-PPase domain maps to 207 to 399; sequence WEPRHIIAKS…LGLPFELVYR (193 aa). ATP is bound at residue 234–240; the sequence is SGGVDSS.

Homodimer.

The enzyme catalyses XMP + L-glutamine + ATP + H2O = GMP + L-glutamate + AMP + diphosphate + 2 H(+). It participates in purine metabolism; GMP biosynthesis; GMP from XMP (L-Gln route): step 1/1. Functionally, catalyzes the synthesis of GMP from XMP. The chain is GMP synthase [glutamine-hydrolyzing] from Nitrosococcus oceani (strain ATCC 19707 / BCRC 17464 / JCM 30415 / NCIMB 11848 / C-107).